Consider the following 883-residue polypeptide: Copper-transporting ATPase PAA2, chloroplastic (883 aa).

A chloroplast-targeting transit peptide spans 1–65 (MASNLLRFPL…TQSFESTESS (65 aa)). Residues 76–146 (TPILLDVSGM…RLTESGFEAK (71 aa)) form the HMA domain. The Cu cation site is built by Cys-87 and Cys-90. A run of 6 helical transmembrane segments spans residues 179–199 (VAFA…HILH), 209–229 (GIWD…GALL), 250–270 (MNSL…ISLV), 274–294 (LEWD…VLLG), 445–465 (AIAG…FAFW), and 499–519 (VLVV…ILIG). Catalysis depends on Asp-548, which acts as the 4-aspartylphosphate intermediate. 761 to 768 (GDGINDAP) provides a ligand contact to ATP. Mg(2+)-binding residues include Asp-762 and Asp-766. Transmembrane regions (helical) follow at residues 822–842 (LAWA…VLLP) and 846–866 (FAMT…FVVS).

Belongs to the cation transport ATPase (P-type) (TC 3.A.3) family. Type IB subfamily. In terms of tissue distribution, expressed in the shoots only and not in the roots.

It localises to the plastid. The protein localises to the chloroplast thylakoid membrane. It catalyses the reaction Cu(2+)(in) + ATP + H2O = Cu(2+)(out) + ADP + phosphate + H(+). In terms of biological role, mediates copper transfer across the chloroplast thylakoid membrane. Required for copper delivery into the thylakoids lumen, which is essential for the function of copper proteins. The protein is Copper-transporting ATPase PAA2, chloroplastic (PAA2) of Arabidopsis thaliana (Mouse-ear cress).